We begin with the raw amino-acid sequence, 323 residues long: Serine racemase (323 aa).

Positions 32, 33, and 52 each coordinate ATP. Catalysis depends on Lys-57, which acts as the Proton acceptor. Lys-57 is subject to Lysino-D-alanine (Lys); alternate. An N6-(pyridoxal phosphate)lysine; alternate modification is found at Lys-57. Ca(2+) is bound at residue Thr-79. Residue Ser-82 is the Proton acceptor of the active site. Position 84 (Asn-84) interacts with pyridoxal 5'-phosphate. 2 residues coordinate ATP: Gln-87 and Tyr-119. A Mg(2+)-binding site is contributed by Asp-176. Positions 183, 184, 185, 186, and 187 each coordinate pyridoxal 5'-phosphate. Residues Glu-208, Gly-212, and Asp-214 each coordinate Ca(2+). Positions 208, 212, and 214 each coordinate Mg(2+). Mn(2+)-binding residues include Glu-208, Gly-212, and Asp-214. Lys-277 contributes to the ATP binding site. Ser-308 contacts pyridoxal 5'-phosphate. Asn-311 is an ATP binding site.

It belongs to the serine/threonine dehydratase family. Homodimer. Mg(2+) serves as cofactor. It depends on Mn(2+) as a cofactor. The cofactor is Ca(2+). Pyridoxal 5'-phosphate is required as a cofactor. In terms of processing, modification of the active site Lys by its substrate Ser to lysino-D-alanine reduces but does not abolish enzyme activity.

It carries out the reaction L-serine = D-serine. It catalyses the reaction L-serine = pyruvate + NH4(+). The catalysed reaction is D-serine = pyruvate + NH4(+). Allosterically activated by ATP, by magnesium, and possibly also by other divalent metal cations. Functionally, catalyzes the synthesis of D-serine from L-serine. Has dehydratase activity towards both L-serine and D-serine. In Schizosaccharomyces pombe (strain 972 / ATCC 24843) (Fission yeast), this protein is Serine racemase.